We begin with the raw amino-acid sequence, 469 residues long: Calcium-binding mitochondrial carrier protein SCaMC-2 (469 aa).

The Mitochondrial intermembrane segment spans residues Met-1–His-189. EF-hand domains lie at Thr-47 to Glu-80, Asp-78 to Lys-113, and Ile-114 to Glu-149. The Ca(2+) site is built by Asp-60, Asp-62, Asp-64, Gln-66, and Glu-71. Solcar repeat units follow at residues Gly-184 to Leu-270, Leu-278 to Ala-363, and Pro-375 to Thr-463. The chain crosses the membrane as a helical span at residues Leu-190–Leu-207. Residues Asp-208–Arg-244 lie on the Mitochondrial matrix side of the membrane. The helical transmembrane segment at Gly-245–Tyr-264 threads the bilayer. Over Glu-265–Gly-287 the chain is Mitochondrial intermembrane. A helical membrane pass occupies residues Ser-288–Met-301. Over Glu-302–Lys-337 the chain is Mitochondrial matrix. The helical transmembrane segment at Gly-338–Tyr-357 threads the bilayer. At Glu-358–Leu-380 the chain is on the mitochondrial intermembrane side. Residues Leu-381 to Leu-398 traverse the membrane as a helical segment. The Mitochondrial matrix portion of the chain corresponds to Ala-399–Arg-437. The helical transmembrane segment at Gly-438–Tyr-457 threads the bilayer. Over Glu-458–Arg-469 the chain is Mitochondrial intermembrane.

The protein belongs to the mitochondrial carrier (TC 2.A.29) family.

It is found in the mitochondrion inner membrane. Its function is as follows. Calcium-dependent mitochondrial solute carrier. Mitochondrial solute carriers shuttle metabolites, nucleotides, and cofactors through the mitochondrial inner membrane. May act as a ATP-Mg/Pi exchanger that mediates the transport of Mg-ATP in exchange for phosphate, catalyzing the net uptake or efflux of adenine nucleotides into or from the mitochondria. This chain is Calcium-binding mitochondrial carrier protein SCaMC-2 (SLC25A25), found in Bos taurus (Bovine).